A 553-amino-acid polypeptide reads, in one-letter code: Formate--tetrahydrofolate ligase (553 aa).

Thr64–Thr71 lines the ATP pocket.

The protein belongs to the formate--tetrahydrofolate ligase family.

It catalyses the reaction (6S)-5,6,7,8-tetrahydrofolate + formate + ATP = (6R)-10-formyltetrahydrofolate + ADP + phosphate. The protein operates within one-carbon metabolism; tetrahydrofolate interconversion. The protein is Formate--tetrahydrofolate ligase of Pseudothermotoga lettingae (strain ATCC BAA-301 / DSM 14385 / NBRC 107922 / TMO) (Thermotoga lettingae).